The sequence spans 104 residues: Protein RnfH (104 aa).

This sequence belongs to the UPF0125 (RnfH) family.

The chain is Protein RnfH from Pseudomonas syringae pv. syringae (strain B728a).